Here is a 242-residue protein sequence, read N- to C-terminus: Venom nerve growth factor 3 (242 aa).

The first 18 residues, Met1–Ala18, serve as a signal peptide directing secretion. The propeptide occupies Ala19 to Arg125. A compositionally biased stretch (basic and acidic residues) spans Leu48–Asp66. The disordered stretch occupies residues Leu48 to Leu69. Cystine bridges form between Cys139–Cys203, Cys181–Cys231, and Cys191–Cys233. Asn147 carries N-linked (GlcNAc...) asparagine glycosylation.

The protein belongs to the NGF-beta family. Homodimer; non-covalently linked. As to expression, expressed by the venom gland.

The protein resides in the secreted. In terms of biological role, nerve growth factor is important for the development and maintenance of the sympathetic and sensory nervous systems. It stimulates division and differentiation of sympathetic and embryonic sensory neurons as well as basal forebrain cholinergic neurons in the brain. Its relevance in the snake venom is not clear. However, it has been shown to inhibit metalloproteinase-dependent proteolysis of platelet glycoprotein Ib alpha, suggesting a metalloproteinase inhibition to prevent metalloprotease autodigestion and/or protection against prey proteases. Binds a lipid between the two protein chains in the homodimer. The lipid-bound form promotes histamine relase from mouse mast cells, contrary to the lipid-free form. The sequence is that of Venom nerve growth factor 3 from Demansia vestigiata (Lesser black whip snake).